A 171-amino-acid chain; its full sequence is 3-hydroxydecanoyl-[acyl-carrier-protein] dehydratase (171 aa).

The active site involves His71.

This sequence belongs to the thioester dehydratase family. FabA subfamily. Homodimer.

Its subcellular location is the cytoplasm. It catalyses the reaction a (3R)-hydroxyacyl-[ACP] = a (2E)-enoyl-[ACP] + H2O. It carries out the reaction (3R)-hydroxydecanoyl-[ACP] = (2E)-decenoyl-[ACP] + H2O. The catalysed reaction is (2E)-decenoyl-[ACP] = (3Z)-decenoyl-[ACP]. It functions in the pathway lipid metabolism; fatty acid biosynthesis. Functionally, necessary for the introduction of cis unsaturation into fatty acids. Catalyzes the dehydration of (3R)-3-hydroxydecanoyl-ACP to E-(2)-decenoyl-ACP and then its isomerization to Z-(3)-decenoyl-ACP. Can catalyze the dehydratase reaction for beta-hydroxyacyl-ACPs with saturated chain lengths up to 16:0, being most active on intermediate chain length. This chain is 3-hydroxydecanoyl-[acyl-carrier-protein] dehydratase, found in Agrobacterium fabrum (strain C58 / ATCC 33970) (Agrobacterium tumefaciens (strain C58)).